A 572-amino-acid chain; its full sequence is 2-succinyl-5-enolpyruvyl-6-hydroxy-3-cyclohexene-1-carboxylate synthase (572 aa).

It belongs to the TPP enzyme family. MenD subfamily. Homodimer. Mg(2+) is required as a cofactor. The cofactor is Mn(2+). Thiamine diphosphate serves as cofactor.

The enzyme catalyses isochorismate + 2-oxoglutarate + H(+) = 5-enolpyruvoyl-6-hydroxy-2-succinyl-cyclohex-3-ene-1-carboxylate + CO2. It functions in the pathway quinol/quinone metabolism; 1,4-dihydroxy-2-naphthoate biosynthesis; 1,4-dihydroxy-2-naphthoate from chorismate: step 2/7. Its pathway is quinol/quinone metabolism; menaquinone biosynthesis. Functionally, catalyzes the thiamine diphosphate-dependent decarboxylation of 2-oxoglutarate and the subsequent addition of the resulting succinic semialdehyde-thiamine pyrophosphate anion to isochorismate to yield 2-succinyl-5-enolpyruvyl-6-hydroxy-3-cyclohexene-1-carboxylate (SEPHCHC). This Shewanella amazonensis (strain ATCC BAA-1098 / SB2B) protein is 2-succinyl-5-enolpyruvyl-6-hydroxy-3-cyclohexene-1-carboxylate synthase.